The sequence spans 383 residues: MSWQDKIAQGLQRRRDAAAYRTRQVNEGANGRWLQSGERQYLNFSSNDYLGLSQNDEVIAAWQQGARRYGVGSGGSGHVTGYSQPHARLEQQLADWLGYPRALLFISGYAANQAVLTALTDADDRILADKLSHASLLEAAAHSPAQLRRFQHNQPEALQNLLIKPCQGQTLVVTEGVFSMDGDSAPLAALQQQTSAAGGWLLVDDAHGIGVHGEEGRGSCWLQGVQPELLVVTFGKAFGLSGAAVLCQEPVAEYLLQYARHLIYSTAMPPAQACALQAALRQVQQGDALRQQLQQRIRQFRTAAAHLPLQLGASKTAIQPLLVGDNQQSLIWAEQLRAAGLWVTAIRPPTVPPGSARLRITLSAAHQPEDIDRLLEVLYGLCH.

Arg21 provides a ligand contact to substrate. Residue 108–109 (GY) participates in pyridoxal 5'-phosphate binding. A substrate-binding site is contributed by His133. Pyridoxal 5'-phosphate-binding residues include Ser179, His207, and Thr233. At Lys236 the chain carries N6-(pyridoxal phosphate)lysine. Substrate is bound at residue Thr350.

This sequence belongs to the class-II pyridoxal-phosphate-dependent aminotransferase family. BioF subfamily. As to quaternary structure, homodimer. Pyridoxal 5'-phosphate is required as a cofactor.

It carries out the reaction 6-carboxyhexanoyl-[ACP] + L-alanine + H(+) = (8S)-8-amino-7-oxononanoate + holo-[ACP] + CO2. The protein operates within cofactor biosynthesis; biotin biosynthesis. Catalyzes the decarboxylative condensation of pimeloyl-[acyl-carrier protein] and L-alanine to produce 8-amino-7-oxononanoate (AON), [acyl-carrier protein], and carbon dioxide. The chain is 8-amino-7-oxononanoate synthase from Yersinia pseudotuberculosis serotype IB (strain PB1/+).